The primary structure comprises 585 residues: DNA ligase (585 aa).

Position 278 (glutamate 278) interacts with ATP. The active-site N6-AMP-lysine intermediate is the lysine 280. ATP contacts are provided by arginine 285, arginine 301, glutamate 330, phenylalanine 370, arginine 444, and lysine 450.

The protein belongs to the ATP-dependent DNA ligase family. Mg(2+) is required as a cofactor.

The enzyme catalyses ATP + (deoxyribonucleotide)n-3'-hydroxyl + 5'-phospho-(deoxyribonucleotide)m = (deoxyribonucleotide)n+m + AMP + diphosphate.. Functionally, DNA ligase that seals nicks in double-stranded DNA during DNA replication, DNA recombination and DNA repair. This is DNA ligase from Haloferax volcanii (strain ATCC 29605 / DSM 3757 / JCM 8879 / NBRC 14742 / NCIMB 2012 / VKM B-1768 / DS2) (Halobacterium volcanii).